We begin with the raw amino-acid sequence, 350 residues long: tRNA uridine(34) hydroxylase (350 aa).

Positions 146 to 240 (DDPDAVFIDM…YARRARAQGL (95 aa)) constitute a Rhodanese domain. Catalysis depends on Cys-200, which acts as the Cysteine persulfide intermediate. The segment covering 319 to 328 (RRRRAGRENG) has biased composition (basic and acidic residues). Residues 319 to 350 (RRRRAGRENGNKIFNKSRGRLNSKLSIPDPAE) are disordered.

Belongs to the TrhO family.

The enzyme catalyses uridine(34) in tRNA + AH2 + O2 = 5-hydroxyuridine(34) in tRNA + A + H2O. Functionally, catalyzes oxygen-dependent 5-hydroxyuridine (ho5U) modification at position 34 in tRNAs. The protein is tRNA uridine(34) hydroxylase of Salmonella typhimurium (strain LT2 / SGSC1412 / ATCC 700720).